The chain runs to 140 residues: Putative esterase SSO2140 (140 aa).

The protein belongs to the thioesterase PaaI family.

The sequence is that of Putative esterase SSO2140 from Saccharolobus solfataricus (strain ATCC 35092 / DSM 1617 / JCM 11322 / P2) (Sulfolobus solfataricus).